A 293-amino-acid polypeptide reads, in one-letter code: Homoserine kinase (293 aa).

83 to 93 (PITRGMGSSSA) serves as a coordination point for ATP.

It belongs to the GHMP kinase family. Homoserine kinase subfamily.

The protein resides in the cytoplasm. The catalysed reaction is L-homoserine + ATP = O-phospho-L-homoserine + ADP + H(+). Its pathway is amino-acid biosynthesis; L-threonine biosynthesis; L-threonine from L-aspartate: step 4/5. Catalyzes the ATP-dependent phosphorylation of L-homoserine to L-homoserine phosphate. The chain is Homoserine kinase from Helicobacter pylori (strain J99 / ATCC 700824) (Campylobacter pylori J99).